Consider the following 302-residue polypeptide: Sushi domain-containing protein 6 (302 aa).

A signal peptide spans 1–39 (MCHGKIAPKSSSEFVVTSVGHGVFLQLVILCALLGDGLA). Residues 40 to 104 (SVCPLPPEPE…TPAMEVSCHL (65 aa)) form the Sushi domain. 2 cysteine pairs are disulfide-bonded: Cys-42–Cys-89 and Cys-74–Cys-102. A helical transmembrane segment spans residues 120 to 140 (IVASTASSVALILLLVVLFVL). 2 disordered regions span residues 202-241 (GSAP…CEAW) and 256-302 (TSSW…LKEA). Composition is skewed to polar residues over residues 212-222 (REQQLQGQEAC), 256-267 (TSSWVAGSGSSR), and 279-290 (SDIQSLLSLTSE).

It localises to the membrane. In terms of biological role, may play a role in growth-suppressive activity and cell death. May be involved in the production of chemokine molecules in umbilical vein endothelial cells (HUVECs) cultured in THP1 monocyte LPS-induced medium. Plays a role in preventing tumor onset. This is Sushi domain-containing protein 6 from Mus musculus (Mouse).